The sequence spans 403 residues: Enoyl-[acyl-carrier-protein] reductase [NADH] (403 aa).

NAD(+) contacts are provided by residues 49-54 (GASSGY), 75-76 (FE), 112-113 (DA), and 141-142 (LA). Y227 contacts substrate. Residue Y237 is the Proton donor of the active site. Residues K246 and 276–278 (VVT) contribute to the NAD(+) site.

Belongs to the TER reductase family. Monomer.

The catalysed reaction is a 2,3-saturated acyl-[ACP] + NAD(+) = a (2E)-enoyl-[ACP] + NADH + H(+). Its pathway is lipid metabolism; fatty acid biosynthesis. Involved in the final reduction of the elongation cycle of fatty acid synthesis (FAS II). Catalyzes the reduction of a carbon-carbon double bond in an enoyl moiety that is covalently linked to an acyl carrier protein (ACP). The polypeptide is Enoyl-[acyl-carrier-protein] reductase [NADH] (Pseudomonas putida (strain ATCC 47054 / DSM 6125 / CFBP 8728 / NCIMB 11950 / KT2440)).